A 300-amino-acid polypeptide reads, in one-letter code: NAD kinase (300 aa).

The active-site Proton acceptor is the Asp75. Residues 75-76, 149-150, Arg177, Asp179, 190-195, Ala214, and Gln248 contribute to the NAD(+) site; these read DG, ND, and TAYALS.

This sequence belongs to the NAD kinase family. A divalent metal cation is required as a cofactor.

Its subcellular location is the cytoplasm. It carries out the reaction NAD(+) + ATP = ADP + NADP(+) + H(+). Functionally, involved in the regulation of the intracellular balance of NAD and NADP, and is a key enzyme in the biosynthesis of NADP. Catalyzes specifically the phosphorylation on 2'-hydroxyl of the adenosine moiety of NAD to yield NADP. The polypeptide is NAD kinase (Paraburkholderia phytofirmans (strain DSM 17436 / LMG 22146 / PsJN) (Burkholderia phytofirmans)).